Reading from the N-terminus, the 400-residue chain is Elongation factor Tu (400 aa).

The 200-residue stretch at 10–209 (KPHVNIGTIG…EVDNYIPTPE (200 aa)) folds into the tr-type G domain. The segment at 19 to 26 (GHVDHGKT) is G1. 19–26 (GHVDHGKT) contributes to the GTP binding site. T26 contributes to the Mg(2+) binding site. The G2 stretch occupies residues 60–64 (GITIN). The segment at 81 to 84 (DCPG) is G3. GTP is bound by residues 81 to 85 (DCPGH) and 136 to 139 (NKCD). The interval 136 to 139 (NKCD) is G4. The interval 174–176 (SAL) is G5.

Belongs to the TRAFAC class translation factor GTPase superfamily. Classic translation factor GTPase family. EF-Tu/EF-1A subfamily. Monomer.

The protein localises to the cytoplasm. The enzyme catalyses GTP + H2O = GDP + phosphate + H(+). GTP hydrolase that promotes the GTP-dependent binding of aminoacyl-tRNA to the A-site of ribosomes during protein biosynthesis. This Ruminiclostridium cellulolyticum (strain ATCC 35319 / DSM 5812 / JCM 6584 / H10) (Clostridium cellulolyticum) protein is Elongation factor Tu.